A 202-amino-acid chain; its full sequence is Hypoxanthine-guanine phosphoribosyltransferase (202 aa).

Diphosphate-binding residues include lysine 66 and glycine 67. Glutamate 122 and aspartate 123 together coordinate Mg(2+). Aspartate 126 functions as the Proton acceptor in the catalytic mechanism. GMP-binding positions include lysine 154, 175–176 (FV), and aspartate 182. Diphosphate is bound at residue arginine 188.

This sequence belongs to the purine/pyrimidine phosphoribosyltransferase family. Homodimer and homotetramer in equilibrium. The presence or absence of divalent metal ions, as well as phosphate, can affect the oligomerization state of the enzyme. Likely functions as a tetramer (rather than a dimer) in its biological environment, which is the most active form. The dimeric structure is also active though ~50% of that of the tetramer. It depends on Mg(2+) as a cofactor.

It is found in the cytoplasm. It carries out the reaction IMP + diphosphate = hypoxanthine + 5-phospho-alpha-D-ribose 1-diphosphate. It catalyses the reaction GMP + diphosphate = guanine + 5-phospho-alpha-D-ribose 1-diphosphate. It participates in purine metabolism; IMP biosynthesis via salvage pathway; IMP from hypoxanthine: step 1/1. The protein operates within purine metabolism; GMP biosynthesis via salvage pathway; GMP from guanine: step 1/1. Its activity is regulated as follows. Competitively inhibited by acyclic nucleoside phosphonates (ANPs) with Ki values as low as 0.69 uM. Prodrugs of these compounds arrest the growth of a virulent strain of M.tuberculosis with MIC50 values as low as 4.5 uM and possess low cytotoxicity in mammalian cells. Inhibited by pyrrolidine nucleoside bisphosphonates, which are also able to arrest the growth of virulent M.tuberculosis not only in its replicating phase but also in its latent phase, and to arrest the growth of M.tuberculosis in infected macrophages while having low cytotoxicity in mammalian cells. In terms of biological role, purine salvage pathway enzyme that catalyzes the transfer of the ribosyl-5-phosphate group from 5-phospho-alpha-D-ribose 1-diphosphate (PRPP) to the N9 position of the 6-oxopurines hypoxanthine and guanine to form the corresponding ribonucleotides IMP (inosine 5'-monophosphate) and GMP (guanosine 5'-monophosphate), with the release of PPi. Thus, specifically recycles hypoxanthine and guanine imported from the external medium, and converts them to IMP and GMP, respectively. Cannot use xanthine as substrate. The sequence is that of Hypoxanthine-guanine phosphoribosyltransferase from Mycobacterium tuberculosis (strain ATCC 25618 / H37Rv).